We begin with the raw amino-acid sequence, 147 residues long: Putative pre-16S rRNA nuclease (147 aa).

It belongs to the YqgF nuclease family.

It is found in the cytoplasm. Could be a nuclease involved in processing of the 5'-end of pre-16S rRNA. In Limosilactobacillus reuteri (strain DSM 20016) (Lactobacillus reuteri), this protein is Putative pre-16S rRNA nuclease.